The primary structure comprises 101 residues: Large ribosomal subunit protein bL21 (101 aa).

This sequence belongs to the bacterial ribosomal protein bL21 family. As to quaternary structure, part of the 50S ribosomal subunit. Contacts protein L20.

This protein binds to 23S rRNA in the presence of protein L20. This Micrococcus luteus (strain ATCC 4698 / DSM 20030 / JCM 1464 / CCM 169 / CCUG 5858 / IAM 1056 / NBRC 3333 / NCIMB 9278 / NCTC 2665 / VKM Ac-2230) (Micrococcus lysodeikticus) protein is Large ribosomal subunit protein bL21.